The primary structure comprises 683 residues: Synaptic vesicle glycoprotein 2B (683 aa).

Over residues methionine 1 to tyrosine 10 the composition is skewed to basic and acidic residues. Positions methionine 1–glycine 73 are disordered. Residues methionine 1 to threonine 110 are Cytoplasmic-facing. At serine 33 the chain carries Phosphoserine. At threonine 36 the chain carries Phosphothreonine. Residues leucine 111–phenylalanine 131 form a helical membrane-spanning segment. At alanine 132 to glycine 148 the chain is on the extracellular side. Residues methionine 149 to alanine 169 traverse the membrane as a helical segment. The Cytoplasmic segment spans residues aspartate 170–leucine 182. The helical transmembrane segment at alanine 183–phenylalanine 203 threads the bilayer. Residues cysteine 204–arginine 205 are Extracellular-facing. A helical membrane pass occupies residues leucine 206–phenylalanine 226. The Cytoplasmic portion of the chain corresponds to leucine 227–serine 237. Residues tryptophan 238–isoleucine 258 form a helical membrane-spanning segment. The Extracellular portion of the chain corresponds to proline 259–arginine 277. Residues valine 278–proline 298 form a helical membrane-spanning segment. The Cytoplasmic segment spans residues glutamate 299–threonine 390. Residues leucine 391 to phenylalanine 411 traverse the membrane as a helical segment. Topologically, residues proline 412 to aspartate 535 are extracellular. Tyrosine 423 carries the phosphotyrosine modification. Residues asparagine 441, asparagine 491, and asparagine 516 are each glycosylated (N-linked (GlcNAc...) asparagine). The helical transmembrane segment at phenylalanine 536–serine 556 threads the bilayer. The Cytoplasmic segment spans residues alanine 557–arginine 565. Residues leucine 566 to glycine 586 form a helical membrane-spanning segment. The Extracellular portion of the chain corresponds to asparagine 587 to methionine 592. The chain crosses the membrane as a helical span at residues isoleucine 593 to isoleucine 613. At threonine 614–alanine 626 the chain is on the cytoplasmic side. Residues phenylalanine 627 to valine 649 traverse the membrane as a helical segment. Residues glycine 650–lysine 653 lie on the Extracellular side of the membrane. The chain crosses the membrane as a helical span at residues valine 654–leucine 672. Residues arginine 673–methionine 683 are Cytoplasmic-facing.

This sequence belongs to the major facilitator superfamily. Interacts with SYT1 in a calcium-independent manner. Forms a complex with SYT1, syntaxin-1 and SNAP25. In terms of assembly, (Microbial infection) Interacts with C.botulinum neurotoxin type A (BoNT/A, botA). As to quaternary structure, (Microbial infection) Interacts with C.botulinum neurotoxin type D (BoNT/D, botD). No evidence for its interaction with BoNT/D has also been published. N-glycosylated. Post-translationally, the N-terminal cytoplasmic domain is phosphorylated by CK1. Expressed in ribbon synapses of the retina (at protein level). Expressed in diaphragm motor nerve terminals (at protein level). Expressed in hippocampus neurons (at protein level).

The protein localises to the cytoplasmic vesicle. It localises to the secretory vesicle. The protein resides in the synaptic vesicle membrane. It is found in the acrosome. Its function is as follows. Probably plays a role in the control of regulated secretion in neural and endocrine cells. (Microbial infection) Receptor for C.botulinum neurotoxin type A (BoNT/A, botA); the toxin probably binds via extracellular loop 4. Functionally, (Microbial infection) Possible receptor for C.botulinum neurotoxin type D (BoNT/D, botD). Not a receptor for C.botulinum neurotoxin type D (BoNT/D, botD). In terms of biological role, (Microbial infection) Receptor for C.botulinum neurotoxin type E (BoNT/E); the toxin probably binds via extracellular loop 4. It probably requires glycosylation of Asn-516. The polypeptide is Synaptic vesicle glycoprotein 2B (Sv2b) (Mus musculus (Mouse)).